Here is a 258-residue protein sequence, read N- to C-terminus: Snake venom serine protease PTLE1 (258 aa).

The signal sequence occupies residues 1–18 (MVLIRVLANLLILQLSYA). Residues 19-24 (QKSSEL) constitute a propeptide that is removed on maturation. Positions 25–249 (VIGGDECNIN…YTDWIENIIA (225 aa)) constitute a Peptidase S1 domain. Intrachain disulfides connect C31–C163, C50–C66, C98–C256, C142–C210, C174–C189, and C200–C225. A glycan (N-linked (GlcNAc...) asparagine) is linked at N44. H65 functions as the Charge relay system in the catalytic mechanism. 2 N-linked (GlcNAc...) asparagine glycosylation sites follow: N79 and N103. Residue D110 is the Charge relay system of the active site. An N-linked (GlcNAc...) asparagine glycan is attached at N121. Residue S204 is the Charge relay system of the active site.

This sequence belongs to the peptidase S1 family. Snake venom subfamily. As to quaternary structure, monomer. As to expression, expressed by the venom gland.

It localises to the secreted. Snake venom serine protease that may act in the hemostasis system of the prey. The protein is Snake venom serine protease PTLE1 of Gloydius halys (Chinese water mocassin).